We begin with the raw amino-acid sequence, 445 residues long: MDRSQYLTVSELTKYLKMKFDRDPYLHTVYLTGELSNFRLRQKHQYFSLKDDNAVIDAVMFEHQFRKIKFTPEQGMKVCVVGHVSLYEKSGRYQIYIDRMEPDGLGSLYLAFEQLKKKLSAEGLFNLPKKQIPMFPKRIAVVTSIDGAVIRDINTTVRRRYPIAQVVLYPTVVQGDKAAADIARQINRANDRGDFDTLIIGRGGGSMEDLWPFNEEVVARAIANSKIPVISSVGHETDTTIADLVADQRAATPTAAAELATPVKLNDALMTLKDDQNRLLNTMRTKINFDRQQLNKQLQSYIFQQPTRLYENYAQKVDQLTQQLGQAAQNKMQELQMNVERLSGRLTAASPLHRVQQQEQLVDQLKKQLVTASLASQNEKKQQVTTLIKQLDSLSPLKIMSRGYTYVTSDEKVVNHASQLTVGQNVHLHFDDGEVQAEIKKVKEH.

Belongs to the XseA family. Heterooligomer composed of large and small subunits.

Its subcellular location is the cytoplasm. It catalyses the reaction Exonucleolytic cleavage in either 5'- to 3'- or 3'- to 5'-direction to yield nucleoside 5'-phosphates.. Functionally, bidirectionally degrades single-stranded DNA into large acid-insoluble oligonucleotides, which are then degraded further into small acid-soluble oligonucleotides. In Limosilactobacillus reuteri (strain DSM 20016) (Lactobacillus reuteri), this protein is Exodeoxyribonuclease 7 large subunit.